The sequence spans 360 residues: Transcription elongation factor, mitochondrial (360 aa).

The transit peptide at 1–35 (MSGSVLFTAGERWRCFLTPSRSSLYWALHNFCCRK) directs the protein to the mitochondrion.

The protein belongs to the TEFM family. As to quaternary structure, interacts with POLRMT.

It localises to the mitochondrion matrix. It is found in the mitochondrion nucleoid. Functionally, transcription elongation factor which increases mitochondrial RNA polymerase processivity. Regulates transcription of the mitochondrial genome, including genes important for the oxidative phosphorylation machinery. This chain is Transcription elongation factor, mitochondrial (TEFM), found in Homo sapiens (Human).